Here is a 209-residue protein sequence, read N- to C-terminus: Probable phosphatidylglycerophosphate synthase (209 aa).

The next 4 helical transmembrane spans lie at 32–52, 105–125, 147–167, and 171–191; these read ILTLLRLVMVPVFLLALFYGG, ALIGLSMLGDLPWWVTVLILT, WGGKLKTFVQAVAIGLFVLPL, and LHVAAVVVMAAAILLTVITGV.

The protein belongs to the CDP-alcohol phosphatidyltransferase class-I family.

Its subcellular location is the cell membrane. It catalyses the reaction a CDP-1,2-diacyl-sn-glycerol + sn-glycerol 3-phosphate = a 1,2-diacyl-sn-glycero-3-phospho-(1'-sn-glycero-3'-phosphate) + CMP + H(+). Its pathway is lipid metabolism; phospholipid metabolism. In terms of biological role, probably catalyzes the synthesis of phosphatidylglycerophosphate by transferring a phosphatidyl group from CDP-diacylglycerol to glycerol 3-phosphate. In Mycobacterium tuberculosis (strain CDC 1551 / Oshkosh), this protein is Probable phosphatidylglycerophosphate synthase.